The primary structure comprises 240 residues: Ubiquinone biosynthesis O-methyltransferase (240 aa).

The S-adenosyl-L-methionine site is built by Arg44, Gly64, Asp85, and Met129.

It belongs to the methyltransferase superfamily. UbiG/COQ3 family.

It catalyses the reaction a 3-demethylubiquinol + S-adenosyl-L-methionine = a ubiquinol + S-adenosyl-L-homocysteine + H(+). The enzyme catalyses a 3-(all-trans-polyprenyl)benzene-1,2-diol + S-adenosyl-L-methionine = a 2-methoxy-6-(all-trans-polyprenyl)phenol + S-adenosyl-L-homocysteine + H(+). It participates in cofactor biosynthesis; ubiquinone biosynthesis. In terms of biological role, O-methyltransferase that catalyzes the 2 O-methylation steps in the ubiquinone biosynthetic pathway. The sequence is that of Ubiquinone biosynthesis O-methyltransferase from Escherichia coli (strain K12 / MC4100 / BW2952).